A 456-amino-acid chain; its full sequence is Na(+)-translocating NADH-quinone reductase subunit A (456 aa).

Belongs to the NqrA family. As to quaternary structure, composed of six subunits; NqrA, NqrB, NqrC, NqrD, NqrE and NqrF.

It catalyses the reaction a ubiquinone + n Na(+)(in) + NADH + H(+) = a ubiquinol + n Na(+)(out) + NAD(+). In terms of biological role, NQR complex catalyzes the reduction of ubiquinone-1 to ubiquinol by two successive reactions, coupled with the transport of Na(+) ions from the cytoplasm to the periplasm. NqrA to NqrE are probably involved in the second step, the conversion of ubisemiquinone to ubiquinol. This is Na(+)-translocating NADH-quinone reductase subunit A from Rhodopirellula baltica (strain DSM 10527 / NCIMB 13988 / SH1).